The chain runs to 248 residues: Phosphoribosyl isomerase A (248 aa).

The Proton acceptor role is filled by Asp-14. Asp-133 serves as the catalytic Proton donor.

Belongs to the HisA/HisF family.

The protein resides in the cytoplasm. The enzyme catalyses 1-(5-phospho-beta-D-ribosyl)-5-[(5-phospho-beta-D-ribosylamino)methylideneamino]imidazole-4-carboxamide = 5-[(5-phospho-1-deoxy-D-ribulos-1-ylimino)methylamino]-1-(5-phospho-beta-D-ribosyl)imidazole-4-carboxamide. It carries out the reaction N-(5-phospho-beta-D-ribosyl)anthranilate = 1-(2-carboxyphenylamino)-1-deoxy-D-ribulose 5-phosphate. Its pathway is amino-acid biosynthesis; L-histidine biosynthesis; L-histidine from 5-phospho-alpha-D-ribose 1-diphosphate: step 4/9. It functions in the pathway amino-acid biosynthesis; L-tryptophan biosynthesis; L-tryptophan from chorismate: step 3/5. Its function is as follows. Involved in both the histidine and tryptophan biosynthetic pathways. The protein is Phosphoribosyl isomerase A of Mycobacterium sp. (strain JLS).